The sequence spans 423 residues: Imidazolonepropionase (423 aa).

His80 and His82 together coordinate Fe(3+). Residues His80 and His82 each contribute to the Zn(2+) site. 4-imidazolone-5-propanoate is bound by residues Arg89, Tyr152, and His185. Tyr152 provides a ligand contact to N-formimidoyl-L-glutamate. His250 provides a ligand contact to Fe(3+). His250 is a Zn(2+) binding site. Gln253 contacts 4-imidazolone-5-propanoate. Asp325 contributes to the Fe(3+) binding site. Asp325 is a Zn(2+) binding site. N-formimidoyl-L-glutamate-binding residues include Asn327 and Gly329. A 4-imidazolone-5-propanoate-binding site is contributed by Thr330.

Belongs to the metallo-dependent hydrolases superfamily. HutI family. Zn(2+) is required as a cofactor. It depends on Fe(3+) as a cofactor.

The protein resides in the cytoplasm. The catalysed reaction is 4-imidazolone-5-propanoate + H2O = N-formimidoyl-L-glutamate. The protein operates within amino-acid degradation; L-histidine degradation into L-glutamate; N-formimidoyl-L-glutamate from L-histidine: step 3/3. Its function is as follows. Catalyzes the hydrolytic cleavage of the carbon-nitrogen bond in imidazolone-5-propanoate to yield N-formimidoyl-L-glutamate. It is the third step in the universal histidine degradation pathway. This chain is Imidazolonepropionase, found in Cupriavidus pinatubonensis (strain JMP 134 / LMG 1197) (Cupriavidus necator (strain JMP 134)).